A 309-amino-acid polypeptide reads, in one-letter code: MGYKHKDLIGTRELSKEEILYFLEAAKEFKELNLSQVKKNDYLRGKTTINAFYENSTRTRTSFEIAAKRLGADTINFSSSNSSVTKGESLNDTMNNMAAMRTDIIVLRHPSSGAAKFAADRTEASVVNAGDGTNEHPSQALLDLFTLREHGKILDKNLNVAIIGDIARSRVARSDIWAMKKFGINLKLFAPRMMMPKDAEVFESQICKNMEEACEGSDVIIMLRIQLERGGADVAFPSSREYSKFFGLNKNRIKLAKPDAIVLHPGPINRGVELNSDVADGTHSVILNQVENGVAIRMAILNTLAKNRG.

2 residues coordinate carbamoyl phosphate: arginine 58 and threonine 59. Residue lysine 86 coordinates L-aspartate. 3 residues coordinate carbamoyl phosphate: arginine 108, histidine 136, and glutamine 139. The L-aspartate site is built by arginine 170 and arginine 224. Residues glycine 266 and proline 267 each coordinate carbamoyl phosphate.

Belongs to the aspartate/ornithine carbamoyltransferase superfamily. ATCase family. As to quaternary structure, heterododecamer (2C3:3R2) of six catalytic PyrB chains organized as two trimers (C3), and six regulatory PyrI chains organized as three dimers (R2).

The enzyme catalyses carbamoyl phosphate + L-aspartate = N-carbamoyl-L-aspartate + phosphate + H(+). Its pathway is pyrimidine metabolism; UMP biosynthesis via de novo pathway; (S)-dihydroorotate from bicarbonate: step 2/3. In terms of biological role, catalyzes the condensation of carbamoyl phosphate and aspartate to form carbamoyl aspartate and inorganic phosphate, the committed step in the de novo pyrimidine nucleotide biosynthesis pathway. This Campylobacter concisus (strain 13826) protein is Aspartate carbamoyltransferase catalytic subunit.